A 207-amino-acid polypeptide reads, in one-letter code: Large ribosomal subunit protein uL4 (207 aa).

The segment at 45 to 78 (RQGTHAVKNRSAVRGGGRKPWRQKGTGRARQGSI) is disordered. Over residues 60–71 (GGRKPWRQKGTG) the composition is skewed to basic residues.

Belongs to the universal ribosomal protein uL4 family. In terms of assembly, part of the 50S ribosomal subunit.

Functionally, one of the primary rRNA binding proteins, this protein initially binds near the 5'-end of the 23S rRNA. It is important during the early stages of 50S assembly. It makes multiple contacts with different domains of the 23S rRNA in the assembled 50S subunit and ribosome. Forms part of the polypeptide exit tunnel. The chain is Large ribosomal subunit protein uL4 from Pediococcus pentosaceus (strain ATCC 25745 / CCUG 21536 / LMG 10740 / 183-1w).